Consider the following 156-residue polypeptide: Transcription elongation factor GreA (156 aa).

Residues 46 to 67 are a coiled coil; that stretch reads AEYHAAREKQSFIEGRIKELEA.

The protein belongs to the GreA/GreB family.

Necessary for efficient RNA polymerase transcription elongation past template-encoded arresting sites. The arresting sites in DNA have the property of trapping a certain fraction of elongating RNA polymerases that pass through, resulting in locked ternary complexes. Cleavage of the nascent transcript by cleavage factors such as GreA or GreB allows the resumption of elongation from the new 3'terminus. GreA releases sequences of 2 to 3 nucleotides. In Cereibacter sphaeroides (strain ATCC 17029 / ATH 2.4.9) (Rhodobacter sphaeroides), this protein is Transcription elongation factor GreA.